The primary structure comprises 396 residues: S-adenosylmethionine synthase (396 aa).

His16 lines the ATP pocket. Position 18 (Asp18) interacts with Mg(2+). Residue Glu44 participates in K(+) binding. Residues Glu57 and Gln100 each coordinate L-methionine. The interval 100–110 (QSVDIAQGVDR) is flexible loop. Residues 165 to 167 (DAK), Asp240, 246 to 247 (RK), Ala263, and Lys267 contribute to the ATP site. Asp240 is a binding site for L-methionine. Lys271 contributes to the L-methionine binding site.

This sequence belongs to the AdoMet synthase family. Homotetramer; dimer of dimers. Requires Mg(2+) as cofactor. K(+) serves as cofactor.

The protein localises to the cytoplasm. The catalysed reaction is L-methionine + ATP + H2O = S-adenosyl-L-methionine + phosphate + diphosphate. It participates in amino-acid biosynthesis; S-adenosyl-L-methionine biosynthesis; S-adenosyl-L-methionine from L-methionine: step 1/1. Catalyzes the formation of S-adenosylmethionine (AdoMet) from methionine and ATP. The overall synthetic reaction is composed of two sequential steps, AdoMet formation and the subsequent tripolyphosphate hydrolysis which occurs prior to release of AdoMet from the enzyme. The chain is S-adenosylmethionine synthase from Pseudomonas syringae pv. tomato (strain ATCC BAA-871 / DC3000).